The chain runs to 256 residues: Phosphatidylglycerol--prolipoprotein diacylglyceryl transferase (256 aa).

The next 3 membrane-spanning stretches (helical) occupy residues 19–39 (VHWY…LGYW), 56–76 (LIFY…MLFY), and 91–111 (IWEG…AAWL). An a 1,2-diacyl-sn-glycero-3-phospho-(1'-sn-glycerol)-binding site is contributed by arginine 139. Residues 231–251 (FGWLTMGQVLSIPMLLIGIWL) traverse the membrane as a helical segment.

This sequence belongs to the Lgt family.

It localises to the cell inner membrane. It carries out the reaction L-cysteinyl-[prolipoprotein] + a 1,2-diacyl-sn-glycero-3-phospho-(1'-sn-glycerol) = an S-1,2-diacyl-sn-glyceryl-L-cysteinyl-[prolipoprotein] + sn-glycerol 1-phosphate + H(+). It participates in protein modification; lipoprotein biosynthesis (diacylglyceryl transfer). Its function is as follows. Catalyzes the transfer of the diacylglyceryl group from phosphatidylglycerol to the sulfhydryl group of the N-terminal cysteine of a prolipoprotein, the first step in the formation of mature lipoproteins. This Legionella pneumophila (strain Paris) protein is Phosphatidylglycerol--prolipoprotein diacylglyceryl transferase.